A 209-amino-acid polypeptide reads, in one-letter code: MRYAKERHNLMVILQRHGIRNEKVLNAIASVPRELFIDEAFSHQAYENNALPIGSGQTISQPYIVGKMTELLELTAQSHVLEVGTGSGYQTAVLAQLVDHVYSVERIKALQWQAKRRLKQLNLHNISTKHGDGWKGWHNKGPFDAIIVTAAAEEMPMELLAQLTDGGRLVIPVGDDLQVLKKITRNGEQFVSQDIEAVRFVPLVAGDLA.

Residue serine 60 is part of the active site.

The protein belongs to the methyltransferase superfamily. L-isoaspartyl/D-aspartyl protein methyltransferase family.

The protein localises to the cytoplasm. The enzyme catalyses [protein]-L-isoaspartate + S-adenosyl-L-methionine = [protein]-L-isoaspartate alpha-methyl ester + S-adenosyl-L-homocysteine. In terms of biological role, catalyzes the methyl esterification of L-isoaspartyl residues in peptides and proteins that result from spontaneous decomposition of normal L-aspartyl and L-asparaginyl residues. It plays a role in the repair and/or degradation of damaged proteins. The protein is Protein-L-isoaspartate O-methyltransferase of Photobacterium profundum (strain SS9).